The following is a 393-amino-acid chain: Chorismate synthase (393 aa).

NADP(+) contacts are provided by Arg-48 and Arg-54. Residues 125–127, 238–239, Gly-278, 293–297, and Arg-319 each bind FMN; these read RSS, NA, and KPTSS. The interval 355–393 is disordered; that stretch reads ACTTPKIPGHTGPREGQEEGPSDSEPKVEFADDPEPDEA.

The protein belongs to the chorismate synthase family. In terms of assembly, homotetramer. It depends on FMNH2 as a cofactor.

The enzyme catalyses 5-O-(1-carboxyvinyl)-3-phosphoshikimate = chorismate + phosphate. It participates in metabolic intermediate biosynthesis; chorismate biosynthesis; chorismate from D-erythrose 4-phosphate and phosphoenolpyruvate: step 7/7. Functionally, catalyzes the anti-1,4-elimination of the C-3 phosphate and the C-6 proR hydrogen from 5-enolpyruvylshikimate-3-phosphate (EPSP) to yield chorismate, which is the branch point compound that serves as the starting substrate for the three terminal pathways of aromatic amino acid biosynthesis. This reaction introduces a second double bond into the aromatic ring system. The chain is Chorismate synthase from Nitrosospira multiformis (strain ATCC 25196 / NCIMB 11849 / C 71).